The chain runs to 292 residues: NAD kinase (292 aa).

Asp73 (proton acceptor) is an active-site residue. NAD(+) contacts are provided by residues 73–74 (DG), 147–148 (NE), His158, Arg175, Asp177, 188–193 (TAYSLS), and Gln247.

Belongs to the NAD kinase family. A divalent metal cation is required as a cofactor.

The protein localises to the cytoplasm. The enzyme catalyses NAD(+) + ATP = ADP + NADP(+) + H(+). In terms of biological role, involved in the regulation of the intracellular balance of NAD and NADP, and is a key enzyme in the biosynthesis of NADP. Catalyzes specifically the phosphorylation on 2'-hydroxyl of the adenosine moiety of NAD to yield NADP. This is NAD kinase from Sodalis glossinidius (strain morsitans).